Consider the following 236-residue polypeptide: MSVKVGWDITHQEFTITDYYYFSILQREAEKAGIEIDEVNDWESLNKYDVIVFNYPEIPFTESEVKDVERWVWKDGKKVILAGYYKNEDRIADTCNTLARAFGMELNPDEVTDEVNNHNGDKYFVVTSKIRRYNKNDKNEVNVEKIVLACTASIKPIMPDTKIVARGEDTAKSNMGNYPLLIAEQIAPPSGGYFCLAGTCVFWDNYSITLYDNLNFSLNLLRHVPPSKGTKLTIGP.

This is an uncharacterized protein from Aquifex aeolicus (strain VF5).